The following is a 164-amino-acid chain: Pyruvoyl-dependent arginine decarboxylase (164 aa).

S52 carries the post-translational modification Pyruvic acid (Ser).

This sequence belongs to the PdaD family. Pyruvate serves as cofactor.

The catalysed reaction is L-arginine + H(+) = agmatine + CO2. In Methanococcus maripaludis (strain C6 / ATCC BAA-1332), this protein is Pyruvoyl-dependent arginine decarboxylase.